We begin with the raw amino-acid sequence, 145 residues long: Superoxide dismutase [Mn/Fe] (145 aa).

Fe(3+) is bound by residues H10 and H64. H10 and H64 together coordinate Mn(2+).

Belongs to the iron/manganese superoxide dismutase family. Mn(2+) is required as a cofactor. It depends on Fe(3+) as a cofactor.

The enzyme catalyses 2 superoxide + 2 H(+) = H2O2 + O2. Its function is as follows. Destroys superoxide anion radicals which are normally produced within the cells and which are toxic to biological systems. Catalyzes the dismutation of superoxide anion radicals into O2 and H2O2 by successive reduction and oxidation of the transition metal ion at the active site. The polypeptide is Superoxide dismutase [Mn/Fe] (sodA) (Streptococcus salivarius).